Here is a 763-residue protein sequence, read N- to C-terminus: Phosphoglycerol transferase I (763 aa).

4 helical membrane-spanning segments follow: residues 4–19 (LLSF…IYAW), 26–48 (WWFA…LFAS), 76–98 (YILP…GWIL), and 105–127 (PHHF…ASPA).

This sequence belongs to the OpgB family.

It localises to the cell inner membrane. It catalyses the reaction a phosphatidylglycerol + a membrane-derived-oligosaccharide D-glucose = a 1,2-diacyl-sn-glycerol + a membrane-derived-oligosaccharide 6-(glycerophospho)-D-glucose.. The protein operates within glycan metabolism; osmoregulated periplasmic glucan (OPG) biosynthesis. In terms of biological role, transfers a phosphoglycerol residue from phosphatidylglycerol to the membrane-bound nascent glucan backbones. The sequence is that of Phosphoglycerol transferase I from Shigella flexneri.